Here is a 682-residue protein sequence, read N- to C-terminus: Activating transcription factor 7-interacting protein 2 (682 aa).

Residues Ser120–Gln148 form a disordered region. Positions Ser137–Gln148 are enriched in polar residues. The stretch at Glu328–Val378 forms a coiled coil. A Phosphoserine modification is found at Ser416. Polar residues-rich tracts occupy residues Ile418–Ser451 and Glu462–Asn490. Disordered stretches follow at residues Ile418–Ala491 and Asn513–Pro538. A phosphoserine mark is found at Ser488 and Ser521. Residues Lys528 to Pro538 are compositionally biased toward polar residues. A Fibronectin type-III domain is found at Pro575 to Asn680.

The protein belongs to the MCAF family. In terms of assembly, interacts with MBD1, SETDB1 and SP1. Probably forms a complex with SETDB1 and MBD1.

The protein resides in the nucleus. Functionally, recruiter that couples transcriptional factors to general transcription apparatus and thereby modulates transcription regulation and chromatin formation. Can both act as an activator or a repressor depending on the context. Mediates MBD1-dependent transcriptional repression, probably by recruiting complexes containing SETDB1. The complex formed with MBD1 and SETDB1 represses transcription and probably couples DNA methylation and histone H3 'Lys-9' trimethylation (H3K9me3) activity. In Homo sapiens (Human), this protein is Activating transcription factor 7-interacting protein 2 (ATF7IP2).